A 197-amino-acid chain; its full sequence is Tyrosine-protein phosphatase-like protein OCA2 (197 aa).

The 151-residue stretch at Ser10–Asn160 folds into the Tyrosine-protein phosphatase domain. Ser181 is subject to Phosphoserine.

It belongs to the protein-tyrosine phosphatase family.

It localises to the cytoplasm. Functionally, required for normal growth in the presence of linoleic acid hydroperoxide (LoaOOH). In Saccharomyces cerevisiae (strain ATCC 204508 / S288c) (Baker's yeast), this protein is Tyrosine-protein phosphatase-like protein OCA2 (OCA2).